The chain runs to 217 residues: MTDDKDAKLIEAGRKLFARDWQFIWASPSIQTLPPMDGVEIAFAGRSNVGKSSLINALTGRNALARTSHTPGRTQELIFFEVPGKKDLRLVDMPGYGYAKAPKSQVASWTELIHKFLLGRASLARVYVLIDARHGLKDVDLEILGTLDRSAVSYQIVLTKADQVKPSELASRIAETEAALAKHPAAFPNVLATSSRSATGMAELRAAMAKLLEERSS.

Positions 37–214 constitute an EngB-type G domain; it reads DGVEIAFAGR…RAAMAKLLEE (178 aa). Residues 45 to 52, 72 to 76, 92 to 95, 159 to 162, and 193 to 195 each bind GTP; these read GRSNVGKS, GRTQE, DMPG, TKAD, and TSS. Residues serine 52 and threonine 74 each contribute to the Mg(2+) site.

The protein belongs to the TRAFAC class TrmE-Era-EngA-EngB-Septin-like GTPase superfamily. EngB GTPase family. Requires Mg(2+) as cofactor.

In terms of biological role, necessary for normal cell division and for the maintenance of normal septation. In Bradyrhizobium diazoefficiens (strain JCM 10833 / BCRC 13528 / IAM 13628 / NBRC 14792 / USDA 110), this protein is Probable GTP-binding protein EngB.